The primary structure comprises 88 residues: Small ribosomal subunit protein eS21 (88 aa).

It belongs to the eukaryotic ribosomal protein eS21 family. In terms of assembly, component of the 40S small ribosomal subunit.

It localises to the cytoplasm. It is found in the cytosol. The protein resides in the rough endoplasmic reticulum. The polypeptide is Small ribosomal subunit protein eS21 (rps-21) (Caenorhabditis elegans).